A 223-amino-acid chain; its full sequence is UPF0441 protein YgiB (223 aa).

Over residues 178–195 (TVPKTAMAPKPATTTTVT) the composition is skewed to low complexity. The segment at 178-223 (TVPKTAMAPKPATTTTVTRGGFGESVAKQSTMQRSATGTSSRSMGG) is disordered. Positions 204-223 (AKQSTMQRSATGTSSRSMGG) are enriched in polar residues.

Belongs to the UPF0441 family.

This chain is UPF0441 protein YgiB, found in Shigella flexneri serotype 5b (strain 8401).